The primary structure comprises 415 residues: Putative F-box protein At5g40050 (415 aa).

The F-box domain maps to Ile13 to Ser59.

In Arabidopsis thaliana (Mouse-ear cress), this protein is Putative F-box protein At5g40050.